The following is a 214-amino-acid chain: Histidine biosynthesis bifunctional protein HisIE (214 aa).

Residues 1 to 114 (MDLSAVRFDE…LEGEKDLGFV (114 aa)) form a phosphoribosyl-AMP cyclohydrolase region. Residues 115–214 (VGQVYATIKE…RSPYDGSHGN (100 aa)) are phosphoribosyl-ATP pyrophosphohydrolase.

The protein in the N-terminal section; belongs to the PRA-CH family. This sequence in the C-terminal section; belongs to the PRA-PH family.

The protein localises to the cytoplasm. It catalyses the reaction 1-(5-phospho-beta-D-ribosyl)-ATP + H2O = 1-(5-phospho-beta-D-ribosyl)-5'-AMP + diphosphate + H(+). It carries out the reaction 1-(5-phospho-beta-D-ribosyl)-5'-AMP + H2O = 1-(5-phospho-beta-D-ribosyl)-5-[(5-phospho-beta-D-ribosylamino)methylideneamino]imidazole-4-carboxamide. Its pathway is amino-acid biosynthesis; L-histidine biosynthesis; L-histidine from 5-phospho-alpha-D-ribose 1-diphosphate: step 2/9. The protein operates within amino-acid biosynthesis; L-histidine biosynthesis; L-histidine from 5-phospho-alpha-D-ribose 1-diphosphate: step 3/9. The chain is Histidine biosynthesis bifunctional protein HisIE from Thermus thermophilus (strain ATCC BAA-163 / DSM 7039 / HB27).